The chain runs to 364 residues: Dihydroorotate dehydrogenase (quinone) (364 aa).

FMN contacts are provided by residues 61–65 and threonine 85; that span reads AGFDK. Position 65 (lysine 65) interacts with substrate. 110 to 114 contributes to the substrate binding site; the sequence is NRMGF. FMN contacts are provided by asparagine 139 and asparagine 170. A substrate-binding site is contributed by asparagine 170. The Nucleophile role is filled by serine 173. A substrate-binding site is contributed by asparagine 175. Residues lysine 214 and alanine 242 each contribute to the FMN site. 243-244 is a substrate binding site; it reads NT. FMN contacts are provided by residues glycine 266, glycine 295, and 316-317; that span reads YS.

It belongs to the dihydroorotate dehydrogenase family. Type 2 subfamily. As to quaternary structure, monomer. Requires FMN as cofactor.

Its subcellular location is the cell membrane. It carries out the reaction (S)-dihydroorotate + a quinone = orotate + a quinol. The protein operates within pyrimidine metabolism; UMP biosynthesis via de novo pathway; orotate from (S)-dihydroorotate (quinone route): step 1/1. In terms of biological role, catalyzes the conversion of dihydroorotate to orotate with quinone as electron acceptor. The chain is Dihydroorotate dehydrogenase (quinone) from Rhodopseudomonas palustris (strain ATCC BAA-98 / CGA009).